Reading from the N-terminus, the 307-residue chain is Elongation factor Ts (307 aa).

Positions T80 to V83 are involved in Mg(2+) ion dislocation from EF-Tu.

It belongs to the EF-Ts family.

It is found in the cytoplasm. Its function is as follows. Associates with the EF-Tu.GDP complex and induces the exchange of GDP to GTP. It remains bound to the aminoacyl-tRNA.EF-Tu.GTP complex up to the GTP hydrolysis stage on the ribosome. The chain is Elongation factor Ts from Rhodospirillum centenum (strain ATCC 51521 / SW).